A 451-amino-acid polypeptide reads, in one-letter code: MNLVVIGVNHKTAPVALRERLAFVGGDIQVAQAQLQQITAGSLIISTCNRTEIYALAPSTQLLANSDAALSKQSDLSLADEPVSTVDLTEQLITWLADFKQVPLEETRPYLYDYVDGQALTHMLRVAAGLDSMILGEPQIFGQIKRSVNQAKEQGFLTNQLNWVVEQIFAAAKRVRNETDVGTQAISLGYAASKLVTQIFDRPEETTFLLIAAGEMNRLVAQNIAGLGVKRILICNRTPERANLLAQELAHLGIQIEVHPLTELDSLLYQADIVSSCSGSMDMLIDKAMTRRALKKRRYKPMLMVDLAVPRDIDSSVGKLDDVYLYSIDDLQHVIAGNLEKRRQAAVEAELLVSHLVVEIERRFQVRKVGQDIHDYRALAAQKAEAVLNEALHELRTSEATAEEVMTELTRRLTQTLVHAPSSLMRRAARDGNNEAIDLIILGLKDAYRKK.

Residues 47–50 (TCNR), S132, 137–139 (EPQ), and Q143 each bind substrate. The active-site Nucleophile is C48. Residue 212 to 217 (AAGEMN) coordinates NADP(+).

The protein belongs to the glutamyl-tRNA reductase family. As to quaternary structure, homodimer.

It catalyses the reaction (S)-4-amino-5-oxopentanoate + tRNA(Glu) + NADP(+) = L-glutamyl-tRNA(Glu) + NADPH + H(+). It functions in the pathway porphyrin-containing compound metabolism; protoporphyrin-IX biosynthesis; 5-aminolevulinate from L-glutamyl-tRNA(Glu): step 1/2. Its function is as follows. Catalyzes the NADPH-dependent reduction of glutamyl-tRNA(Glu) to glutamate 1-semialdehyde (GSA). The sequence is that of Glutamyl-tRNA reductase from Psychrobacter sp. (strain PRwf-1).